The sequence spans 243 residues: Leucyl/phenylalanyl-tRNA--protein transferase (243 aa).

The protein belongs to the L/F-transferase family.

The protein localises to the cytoplasm. The catalysed reaction is N-terminal L-lysyl-[protein] + L-leucyl-tRNA(Leu) = N-terminal L-leucyl-L-lysyl-[protein] + tRNA(Leu) + H(+). It carries out the reaction N-terminal L-arginyl-[protein] + L-leucyl-tRNA(Leu) = N-terminal L-leucyl-L-arginyl-[protein] + tRNA(Leu) + H(+). The enzyme catalyses L-phenylalanyl-tRNA(Phe) + an N-terminal L-alpha-aminoacyl-[protein] = an N-terminal L-phenylalanyl-L-alpha-aminoacyl-[protein] + tRNA(Phe). In terms of biological role, functions in the N-end rule pathway of protein degradation where it conjugates Leu, Phe and, less efficiently, Met from aminoacyl-tRNAs to the N-termini of proteins containing an N-terminal arginine or lysine. In Vibrio cholerae serotype O1 (strain ATCC 39541 / Classical Ogawa 395 / O395), this protein is Leucyl/phenylalanyl-tRNA--protein transferase.